Consider the following 351-residue polypeptide: S-adenosylmethionine:tRNA ribosyltransferase-isomerase (351 aa).

It belongs to the QueA family. Monomer.

The protein localises to the cytoplasm. The catalysed reaction is 7-aminomethyl-7-carbaguanosine(34) in tRNA + S-adenosyl-L-methionine = epoxyqueuosine(34) in tRNA + adenine + L-methionine + 2 H(+). Its pathway is tRNA modification; tRNA-queuosine biosynthesis. Its function is as follows. Transfers and isomerizes the ribose moiety from AdoMet to the 7-aminomethyl group of 7-deazaguanine (preQ1-tRNA) to give epoxyqueuosine (oQ-tRNA). This Idiomarina loihiensis (strain ATCC BAA-735 / DSM 15497 / L2-TR) protein is S-adenosylmethionine:tRNA ribosyltransferase-isomerase.